Reading from the N-terminus, the 135-residue chain is DNA-directed RNA polymerase subunit omega (135 aa).

The interval 107–135 is disordered; that stretch reads ASQESQDYEVDGEIDDEINDQDGDEEVSV. The span at 112 to 135 shows a compositional bias: acidic residues; that stretch reads QDYEVDGEIDDEINDQDGDEEVSV.

It belongs to the RNA polymerase subunit omega family. The RNAP catalytic core consists of 2 alpha, 1 beta, 1 beta' and 1 omega subunit. When a sigma factor is associated with the core the holoenzyme is formed, which can initiate transcription.

It carries out the reaction RNA(n) + a ribonucleoside 5'-triphosphate = RNA(n+1) + diphosphate. Functionally, promotes RNA polymerase assembly. Latches the N- and C-terminal regions of the beta' subunit thereby facilitating its interaction with the beta and alpha subunits. In Wolbachia pipientis wMel, this protein is DNA-directed RNA polymerase subunit omega.